Consider the following 217-residue polypeptide: Heart- and neural crest derivatives-expressed protein 2 (217 aa).

The tract at residues 76–116 is disordered; it reads DHSHYGGVPPGAGPPGLGGPRPVKRRGTANRKERRRTQSIN. Gly residues predominate over residues 83–94; the sequence is VPPGAGPPGLGG. Over residues 97–112 the composition is skewed to basic residues; the sequence is PVKRRGTANRKERRRT. One can recognise a bHLH domain in the interval 99 to 151; the sequence is KRRGTANRKERRRTQSINSAFAELRECIPNVPADTKLSKIKTLRLATSYIAYL.

In terms of assembly, efficient DNA binding requires dimerization with another bHLH protein. Forms homodimers and heterodimers with TCF3 gene products E12 and E47, HAND1 and HEY1, HEY2 and HEYL (hairy-related transcription factors).

It is found in the nucleus. Its function is as follows. Essential for cardiac morphogenesis, particularly for the formation of the right ventricle and of the aortic arch arteries. Required for vascular development and regulation of angiogenesis, possibly through a VEGF signaling pathway. Also plays an important role in limb development, particularly in the establishment of anterior-posterior polarization, acting as an upstream regulator of sonic hedgehog (SHH) induction in the limb bud. Is involved in the development of branchial arches, which give rise to unique structures in the head and neck. Binds DNA on E-box consensus sequence 5'-CANNTG-3'. This is Heart- and neural crest derivatives-expressed protein 2 (Hand2) from Rattus norvegicus (Rat).